Consider the following 315-residue polypeptide: Probable diguanylate cyclase DgcF (315 aa).

The next 4 membrane-spanning stretches (helical) occupy residues 10 to 30 (FSTG…GVLP), 41 to 61 (IALI…SLAF), 80 to 100 (LLTF…VIDI), and 116 to 136 (LGIA…AAIN). The GGDEF domain occupies 173-310 (QHLTVMLLDI…GRNRTSTMRY (138 aa)). Residues Asp-181 and Ile-182 each coordinate Mg(2+). Residues Asn-189, His-194, and Asp-198 each contribute to the substrate site. Position 224 (Glu-224) interacts with Mg(2+).

In terms of assembly, homodimer. Mg(2+) serves as cofactor.

Its subcellular location is the cell membrane. It catalyses the reaction 2 GTP = 3',3'-c-di-GMP + 2 diphosphate. Its pathway is purine metabolism; 3',5'-cyclic di-GMP biosynthesis. Functionally, catalyzes the synthesis of cyclic-di-GMP (c-di-GMP) via the condensation of 2 GTP molecules. The polypeptide is Probable diguanylate cyclase DgcF (Escherichia coli (strain K12)).